The sequence spans 495 residues: MPWFKNLIKISKTITNQSSSYKSITPLASPLLAQFLQFTKQYSTNDHVVGLEATKSDQKPRIVVLGSGWAGCRLMKDIDTNIYDVVCVSPRNHMVFTPLLASTCVGTLEFRSVAEPIGRIQPAVSTQPASYFFLANCNAIDFDNHMIQCQTVTEGVETLEPWKFNVSYDKLVIASGAHALTFGIKGVNEHATFLREVHHAQEIRRKLLLNLMLSDVPGVSEEEKRRLLHCVVVGGGPTGVEFSGELSDFILKDVHQRYAHVKDYIHVTLIEANEILSSFDDRLRVYATNQLTKSGVRLVRGLVQHVQPDKIILSDGTNVPYGLLVWSTGVGPSPFVNSLDIPKAKGRIGIDEWLRVPSVQDVYSIGDCSGFLESTGRQVLPALAQVAERQGKYLASLLNKVGKEGGGHANCAQNINLGDPFVYKHLGSMATIGRYKALVDLRESKEAKGVSLAGFTSFFVWRSAYLTRVVSWRNKIYVLINWLTTLVFGRDISRI.

A mitochondrion-targeting transit peptide spans Met1–Gln41. Arg61–Arg91 is a binding site for FAD. Leu228–Tyr264 is a binding site for NAD(+). The short motif at Leu486–Ile495 is the Microbody targeting signal element.

Belongs to the NADH dehydrogenase family. Requires FAD as cofactor.

It is found in the mitochondrion inner membrane. Its subcellular location is the peroxisome. It carries out the reaction a quinone + NADH + H(+) = a quinol + NAD(+). It catalyses the reaction a ubiquinone + NADH + H(+) = a ubiquinol + NAD(+). In terms of biological role, alternative NADH-ubiquinone oxidoreductase which catalyzes the oxidation of mitochondrial NADH does not translocate protons across the inner mitochondrial membrane. This is Internal alternative NAD(P)H-ubiquinone oxidoreductase A1, mitochondrial (NDA1) from Solanum tuberosum (Potato).